The chain runs to 142 residues: Small ribosomal subunit protein bS6 (142 aa).

Over residues 110–133 (NKKPSHAKEKHEKTEHTHSHHAEE) the composition is skewed to basic and acidic residues. A disordered region spans residues 110–142 (NKKPSHAKEKHEKTEHTHSHHAEEAESVGSHSE).

The protein belongs to the bacterial ribosomal protein bS6 family.

Its function is as follows. Binds together with bS18 to 16S ribosomal RNA. This is Small ribosomal subunit protein bS6 from Helicobacter pylori (strain P12).